The sequence spans 315 residues: tRNA dimethylallyltransferase (315 aa).

14 to 21 (GATATGKS) contributes to the ATP binding site. Substrate is bound at residue 16–21 (TATGKS). The interaction with substrate tRNA stretch occupies residues 39 to 42 (DSRQ).

The protein belongs to the IPP transferase family. In terms of assembly, monomer. Requires Mg(2+) as cofactor.

It carries out the reaction adenosine(37) in tRNA + dimethylallyl diphosphate = N(6)-dimethylallyladenosine(37) in tRNA + diphosphate. Functionally, catalyzes the transfer of a dimethylallyl group onto the adenine at position 37 in tRNAs that read codons beginning with uridine, leading to the formation of N6-(dimethylallyl)adenosine (i(6)A). This is tRNA dimethylallyltransferase from Microcystis aeruginosa (strain NIES-843 / IAM M-2473).